The primary structure comprises 430 residues: Neuropeptide FF receptor 1 (430 aa).

The segment at 1 to 20 is disordered; it reads MEGEPSQPPNSSWPLSQNGT. Topologically, residues 1–43 are extracellular; that stretch reads MEGEPSQPPNSSWPLSQNGTNTEATPATNLTFSSYYQHTSPVA. Over residues 9-20 the composition is skewed to polar residues; that stretch reads PNSSWPLSQNGT. N-linked (GlcNAc...) asparagine glycans are attached at residues Asn10, Asn18, and Asn29. A helical membrane pass occupies residues 44–64; that stretch reads AMFIVAYALIFLLCMVGNTLV. Topologically, residues 65 to 80 are cytoplasmic; it reads CFIVLKNRHMHTVTNM. A helical transmembrane segment spans residues 81 to 101; that stretch reads FILNLAVSDLLVGIFCMPTTL. Residues 102-117 are Extracellular-facing; it reads VDNLITGWPFDNATCK. A glycan (N-linked (GlcNAc...) asparagine) is linked at Asn113. Residues Cys116 and Cys203 are joined by a disulfide bond. The chain crosses the membrane as a helical span at residues 118–138; the sequence is MSGLVQGMSVSASVFTLVAIA. Residues 139-158 lie on the Cytoplasmic side of the membrane; sequence VERFRCIVHPFREKLTLRKA. The chain crosses the membrane as a helical span at residues 159 to 179; sequence LVTIAVIWALALLIMCPSAVT. The Extracellular portion of the chain corresponds to 180–214; sequence LTVTREEHHFMVDARNRSYPLYSCWEAWPEKGMRR. A glycan (N-linked (GlcNAc...) asparagine) is linked at Asn195. Residues 215 to 235 form a helical membrane-spanning segment; sequence VYTTVLFSHIYLAPLALIVVM. Residues 236 to 271 lie on the Cytoplasmic side of the membrane; it reads YARIARKLCQAPGPAPGGEEAADPRASRRRARVVHM. A helical membrane pass occupies residues 272 to 292; sequence LVMVALFFTLSWLPLWALLLL. Topologically, residues 293–307 are extracellular; the sequence is IDYGQLSAPQLHLVT. A helical membrane pass occupies residues 308 to 328; the sequence is VYAFPFAHWLAFFNSSANPII. The Cytoplasmic segment spans residues 329–430; sequence YGYFNENFRR…LPLTIPAWDI (102 aa). The span at 379 to 404 shows a compositional bias: low complexity; sequence SDSGLPSESGPSSGAPRPGRLPLRNG. Positions 379-413 are disordered; that stretch reads SDSGLPSESGPSSGAPRPGRLPLRNGRVAHHGLPR.

The protein belongs to the G-protein coupled receptor 1 family.

The protein localises to the cell membrane. Receptor for NPAF (A-18-F-amide) and NPFF (F-8-F-amide) neuropeptides, also known as morphine-modulating peptides. Can also be activated by a variety of naturally occurring or synthetic FMRF-amide like ligands. This receptor mediates its action by association with G proteins that activate a phosphatidylinositol-calcium second messenger system. The chain is Neuropeptide FF receptor 1 from Homo sapiens (Human).